Reading from the N-terminus, the 504-residue chain is Cytoplasmic dynein 1 light intermediate chain 1 (504 aa).

An ATP-binding site is contributed by 35-42 (GDPTSGKS). Composition is skewed to low complexity over residues 167 to 189 (TTTA…TNKT), 392 to 425 (NSPS…NTPL), and 437 to 446 (SSNNPVAASP). Disordered stretches follow at residues 167-195 (TTTA…TTDK), 383-446 (LDND…AASP), and 464-504 (DKTS…QQKK). Residues 464–473 (DKTSSRKDLK) show a composition bias toward basic and acidic residues. Polar residues predominate over residues 475-487 (SLASPPTTSVSSN). Over residues 488-504 (AREDAKKELDKLKQQKK) the composition is skewed to basic and acidic residues.

The protein belongs to the dynein light intermediate chain family. As to quaternary structure, homodimer. The cytoplasmic dynein 1 complex consists of two catalytic heavy chains (HCs) and a number of non-catalytic subunits presented by intermediate chains (ICs), light intermediate chains (LICs) and light chains (LCs).

It is found in the cytoplasm. It localises to the cytoskeleton. In terms of biological role, acts as one of several non-catalytic accessory components of the cytoplasmic dynein 1 complex that are thought to be involved in linking dynein to cargos and to adapter proteins that regulate dynein function. Cytoplasmic dynein 1 acts as a motor for the intracellular retrograde motility of vesicles and organelles along microtubules. May play a role in binding dynein to membranous organelles or chromosomes. The chain is Cytoplasmic dynein 1 light intermediate chain 1 (dync1li1) from Dictyostelium discoideum (Social amoeba).